The following is a 175-amino-acid chain: Protein-export protein SecB (175 aa).

Polar residues predominate over residues 153–163 (QQQPDAANGND). The tract at residues 153-175 (QQQPDAANGNDSGIILPPGATRQ) is disordered.

The protein belongs to the SecB family. In terms of assembly, homotetramer, a dimer of dimers. One homotetramer interacts with 1 SecA dimer.

It localises to the cytoplasm. In terms of biological role, one of the proteins required for the normal export of preproteins out of the cell cytoplasm. It is a molecular chaperone that binds to a subset of precursor proteins, maintaining them in a translocation-competent state. It also specifically binds to its receptor SecA. The protein is Protein-export protein SecB of Bordetella bronchiseptica (strain ATCC BAA-588 / NCTC 13252 / RB50) (Alcaligenes bronchisepticus).